A 183-amino-acid chain; its full sequence is MIKLFSLKQQKKEEESAGGTKGSSKKASAAQLRIQKDINELNLPKTCEIEFSDHDDLLNFKLVICPDEGFYKGGKFVFSFKVGQGYPHDPPKVKCETMVYHPNIDLEGNVCLNILREDWKPVLTINSIIYGLQYLFLEPNPEDPLNKEAAEVLQNNRRLFEQNVQRSMRGGYIGSTYFERCLK.

N-acetylmethionine is present on methionine 1. The interval 1-28 is disordered; sequence MIKLFSLKQQKKEEESAGGTKGSSKKAS. Residues 29–173 form the UBC core domain; sequence AAQLRIQKDI…VQRSMRGGYI (145 aa). Cysteine 111 (glycyl thioester intermediate) is an active-site residue.

Belongs to the ubiquitin-conjugating enzyme family. UBC12 subfamily. Post-translationally, the acetylation of Met-1 increases affinity for DCUN1D1 by about 2 orders of magnitude and is crucial for NEDD8 transfer to cullins.

It catalyses the reaction [E1 NEDD8-activating enzyme]-S-[NEDD8 protein]-yl-L-cysteine + [E2 NEDD8-conjugating enzyme]-L-cysteine = [E1 NEDD8-activating enzyme]-L-cysteine + [E2 NEDD8-conjugating enzyme]-S-[NEDD8-protein]-yl-L-cysteine.. It functions in the pathway protein modification; protein neddylation. Its function is as follows. Accepts the ubiquitin-like protein NEDD8 from the UBA3-NAE1 E1 complex and catalyzes its covalent attachment to other proteins. The specific interaction with the E3 ubiquitin ligase rbx1, but not rbx2, suggests that the rbx1-ube2m complex neddylates specific target proteins, such as cul1, cul2, cul3 and cul4. Involved in cell proliferation. This is NEDD8-conjugating enzyme Ubc12 (ube2m) from Xenopus tropicalis (Western clawed frog).